Here is a 349-residue protein sequence, read N- to C-terminus: NADH-quinone oxidoreductase subunit H (349 aa).

8 helical membrane-spanning segments follow: residues 20-42 (WTLIKIVLIVAPMMLGVAYLTYF), 88-108 (GIFIIAPMLAIAPALAAWAVV), 123-143 (LLYIMAITSMGVYGIILSGWA), 167-187 (MGFSLICVLMVSNSLNLVEIV), 202-222 (FLSWNWLPLFPMFLVYLISGV), 249-269 (GMAFAVFFLAEYANMILVSAL), 284-304 (FLPDGILWLFAKMSAILFLFL), and 325-345 (VFVPICLIWLVVVGVWMMSPL).

Belongs to the complex I subunit 1 family. As to quaternary structure, NDH-1 is composed of 14 different subunits. Subunits NuoA, H, J, K, L, M, N constitute the membrane sector of the complex.

The protein localises to the cell inner membrane. It carries out the reaction a quinone + NADH + 5 H(+)(in) = a quinol + NAD(+) + 4 H(+)(out). Functionally, NDH-1 shuttles electrons from NADH, via FMN and iron-sulfur (Fe-S) centers, to quinones in the respiratory chain. The immediate electron acceptor for the enzyme in this species is believed to be ubiquinone. Couples the redox reaction to proton translocation (for every two electrons transferred, four hydrogen ions are translocated across the cytoplasmic membrane), and thus conserves the redox energy in a proton gradient. This subunit may bind ubiquinone. The chain is NADH-quinone oxidoreductase subunit H from Dechloromonas aromatica (strain RCB).